We begin with the raw amino-acid sequence, 245 residues long: Phosphoribosylaminoimidazole-succinocarboxamide synthase (245 aa).

This sequence belongs to the SAICAR synthetase family.

It carries out the reaction 5-amino-1-(5-phospho-D-ribosyl)imidazole-4-carboxylate + L-aspartate + ATP = (2S)-2-[5-amino-1-(5-phospho-beta-D-ribosyl)imidazole-4-carboxamido]succinate + ADP + phosphate + 2 H(+). Its pathway is purine metabolism; IMP biosynthesis via de novo pathway; 5-amino-1-(5-phospho-D-ribosyl)imidazole-4-carboxamide from 5-amino-1-(5-phospho-D-ribosyl)imidazole-4-carboxylate: step 1/2. The chain is Phosphoribosylaminoimidazole-succinocarboxamide synthase from Nostoc sp. (strain PCC 7120 / SAG 25.82 / UTEX 2576).